The following is a 166-amino-acid chain: Co-chaperone protein HscB homolog (166 aa).

Residues 3 to 75 (QYFTLFRIEP…IDRAAYLLKT (73 aa)) form the J domain.

Belongs to the HscB family. In terms of assembly, interacts with HscA and stimulates its ATPase activity.

Functionally, co-chaperone involved in the maturation of iron-sulfur cluster-containing proteins. Seems to help targeting proteins to be folded toward HscA. The chain is Co-chaperone protein HscB homolog from Neisseria meningitidis serogroup A / serotype 4A (strain DSM 15465 / Z2491).